A 312-amino-acid polypeptide reads, in one-letter code: Olfactory receptor 4L1 (312 aa).

The Extracellular segment spans residues 1–25; sequence MDLKNGSLVTEFILLGFFGRWELQI. A glycan (N-linked (GlcNAc...) asparagine) is linked at asparagine 5. The helical transmembrane segment at 26–49 threads the bilayer; the sequence is FFFVTFSLIYGATVMGNILIMVTV. The Cytoplasmic segment spans residues 50–57; sequence TCRSTLHS. A helical membrane pass occupies residues 58-79; sequence PLYFLLGNLSFLDMCLSTATTP. Residues 80–100 are Extracellular-facing; sequence KMIIDLLTDHKTISVWGCVTQ. Cysteine 97 and cysteine 189 are oxidised to a cystine. A helical membrane pass occupies residues 101-120; that stretch reads MFFMHFFGGAEMTLLIIMAF. The Cytoplasmic segment spans residues 121–139; that stretch reads DRYVAICKPLHYRTIMSHK. Residues 140-158 form a helical membrane-spanning segment; that stretch reads LLKGFAILSWIIGFLHSIS. Over 159–195 the chain is Extracellular; it reads QIVLTMNLPFCGHNVINNIFCDLPLVIKLACIETYTL. A helical membrane pass occupies residues 196–219; it reads ELFVIADSGLLSFTCFILLLVSYI. Residues 220–235 lie on the Cytoplasmic side of the membrane; it reads VILVSVPKKSSHGLSK. Residues 236-258 form a helical membrane-spanning segment; that stretch reads ALSTLSAHIIVVTLFFGPCIFIY. Residues 259-269 lie on the Extracellular side of the membrane; it reads VWPFSSLASNK. Asparagine 268 carries N-linked (GlcNAc...) asparagine glycosylation. Residues 270 to 289 traverse the membrane as a helical segment; sequence TLAVFYTVITPLLNPSIYTL. Topologically, residues 290–312 are cytoplasmic; sequence RNKKMQEAIRKLRFQYVSSAQNF.

It belongs to the G-protein coupled receptor 1 family.

It localises to the cell membrane. In terms of biological role, odorant receptor. This is Olfactory receptor 4L1 (OR4L1) from Homo sapiens (Human).